Consider the following 235-residue polypeptide: MMLNSDYLNLLDLMQITNANFPIGTFSHSFGIETYIRKDIVFDGDSLIRALLLYMNEQLLHGDLLAIYQIFKLLPKQKINAIWEIDQMINFQGLARETREGQRRIGQQMVKIYNELFDCELLVEYAQRIKDRKSYGNPAVAFALLAMHLKIDLKTALYTHLYSTVAALTQNCVRAIPLGQVKGQKIIHKLKHVYFDDIIDKVFSLDFKTDFCKNIPGLEIAQMEHEDTPVRLFMS.

The protein belongs to the UreF family. In terms of assembly, ureD, UreF and UreG form a complex that acts as a GTP-hydrolysis-dependent molecular chaperone, activating the urease apoprotein by helping to assemble the nickel containing metallocenter of UreC. The UreE protein probably delivers the nickel.

The protein localises to the cytoplasm. Its function is as follows. Required for maturation of urease via the functional incorporation of the urease nickel metallocenter. The protein is Urease accessory protein UreF of Ureaplasma urealyticum serovar 10 (strain ATCC 33699 / Western).